Here is a 432-residue protein sequence, read N- to C-terminus: MAKNVVVVGSQWGDEGKGKVVDLLTEHTGAVVRFQGGHNAGHTLVIDGEQTILHLIPSGVLREGVQCLIGNGVVLAPDALLEEVQELEGKGVPARERLRISPACPLILPCHVALDKAREAARGQARIGTTGRGIGPAYEDKVSRRGIRVADLFHRERLAAKLGELLDYHNFVLQHYFHEQPIDFQDVLERCLTYADELRPMVADIGQLLQEHMDAGRDLLFEGAQGTLLDIDHGTYPFVTSSNTVAGAAATGTGIGPRDLHYVLGITKAYTTRVGSGPFPTELEDEIGDLLGERGREFGATTGRKRRCGWFDAVALRRAAQINSLSGLCITKLDVLDELETLRICIGYQCGDQLWESLPPGAELLADCEPQYIDLPGWQSSTLGVQQWDDLPENARAYLRKLEELIGVPVAIVSTGPDRKETIVLQNPFESA.

GTP-binding positions include 13-19 (GDEGKGK) and 41-43 (GHT). D14 functions as the Proton acceptor in the catalytic mechanism. Residues D14 and G41 each contribute to the Mg(2+) site. IMP contacts are provided by residues 14-17 (DEGK), 39-42 (NAGH), T130, R144, Q225, T240, and R304. The active-site Proton donor is the H42. Residue 300–306 (ATTGRKR) participates in substrate binding. GTP-binding positions include R306, 332 to 334 (KLD), and 414 to 416 (STG).

The protein belongs to the adenylosuccinate synthetase family. As to quaternary structure, homodimer. Mg(2+) is required as a cofactor.

It localises to the cytoplasm. It catalyses the reaction IMP + L-aspartate + GTP = N(6)-(1,2-dicarboxyethyl)-AMP + GDP + phosphate + 2 H(+). The protein operates within purine metabolism; AMP biosynthesis via de novo pathway; AMP from IMP: step 1/2. Functionally, plays an important role in the de novo pathway of purine nucleotide biosynthesis. Catalyzes the first committed step in the biosynthesis of AMP from IMP. This is Adenylosuccinate synthetase from Alkalilimnicola ehrlichii (strain ATCC BAA-1101 / DSM 17681 / MLHE-1).